The sequence spans 377 residues: Delta(12) fatty acid desaturase DES8.11 (377 aa).

2 helical membrane passes run leucine 55–proline 75 and leucine 79–glycine 99. The Histidine box-1 signature appears at histidine 100–histidine 104. The helical transmembrane segment at leucine 112–tryptophan 132 threads the bilayer. A Histidine box-2 motif is present at residues histidine 136–histidine 140. 3 helical membrane-spanning segments follow: residues valine 174–serine 194, valine 220–alanine 240, and alanine 244–isoleucine 264. The short motif at histidine 310–histidine 314 is the Histidine box-3 element.

It belongs to the fatty acid desaturase type 1 family.

It localises to the membrane. It participates in lipid metabolism; polyunsaturated fatty acid biosynthesis. Converts linoleic acid into a conjugated octadecatrienoic acid, probably calendic acid. This is Delta(12) fatty acid desaturase DES8.11 from Calendula officinalis (Pot marigold).